Consider the following 595-residue polypeptide: Prolycopene isomerase, chloroplastic (595 aa).

Residues Met-1 to Ser-56 constitute a chloroplast transit peptide. An N-acetylvaline modification is found at Val-57.

The protein belongs to the carotenoid/retinoid oxidoreductase family. CrtISO subfamily. Requires NAD(+) as cofactor. NADP(+) is required as a cofactor. FAD serves as cofactor.

Its subcellular location is the plastid. It localises to the chloroplast membrane. It catalyses the reaction 7,7',9,9'-tetra-cis-lycopene = all-trans-lycopene. The protein operates within carotenoid biosynthesis; lycopene biosynthesis. Functionally, carotene cis-trans-isomerase that converts 7,9,9'-tri-cis-neurosporene to 9'-cis-neurosporene and 7,9,9',7'-tetra-cis-lycopene (also known as prolycopene) into all-trans-lycopene. Isomerization requires redox-active components, suggesting that isomerization is achieved by a reversible redox reaction acting at specific double bonds. Isomerizes adjacent cis-double bonds at C7 and C9 pairwise into the trans-configuration, but is incapable of isomerizing single cis-double bonds at C9 and C9'. Carotenoid biosynthesis is partly required to form the prolamellar bodies of etioplasts. In Arabidopsis thaliana (Mouse-ear cress), this protein is Prolycopene isomerase, chloroplastic (CRTISO).